We begin with the raw amino-acid sequence, 421 residues long: Lipid II:glycine glycyltransferase (421 aa).

The protein belongs to the FemABX family. Monomer.

The protein localises to the cytoplasm. It carries out the reaction beta-D-GlcNAc-(1-&gt;4)-Mur2Ac(oyl-L-Ala-D-isoglutaminyl-L-Lys-D-Ala-D-Ala)-di-trans,octa-cis-undecaprenyl diphosphate + glycyl-tRNA(Gly) = beta-D-GlcNAc-(1-&gt;4)-Mur2Ac(oyl-L-Ala-D-isoglutaminyl-L-Lys-(N(6)-Gly)-D-Ala-D-Ala)-di-trans,octa-cis-undecaprenyl diphosphate + tRNA(Gly) + H(+). Its function is as follows. Catalyzes the incorporation of the first glycine of the pentaglycine interpeptide bridge, which is characteristic of the S.aureus peptidoglycan. This glycine is added to the epsilon-amino group of the L-lysine of the membrane-bound lipid II intermediate (GlcNAc-(beta-1,4)-N-acetylmuramic acid(-L-Ala-D-iGln-L-Lys-D-Ala-D-Ala)-pyrophosphoryl-undecaprenol), using glycyl-tRNA(Gly) as donor, in a ribosome-independent mechanism. Involved in methicillin resistance. This chain is Lipid II:glycine glycyltransferase (femX), found in Staphylococcus aureus (strain MRSA252).